The chain runs to 321 residues: GTP 3',8-cyclase (321 aa).

The region spanning 5-227 (SYDRVVDYLR…DEGYDGASPS (223 aa)) is the Radical SAM core domain. Position 14 (R14) interacts with GTP. [4Fe-4S] cluster contacts are provided by C21 and C25. Position 27 (Y27) interacts with S-adenosyl-L-methionine. C28 provides a ligand contact to [4Fe-4S] cluster. GTP is bound at residue R64. G68 contacts S-adenosyl-L-methionine. T95 serves as a coordination point for GTP. S119 serves as a coordination point for S-adenosyl-L-methionine. K155 contributes to the GTP binding site. Residue M189 participates in S-adenosyl-L-methionine binding. Positions 249 and 252 each coordinate [4Fe-4S] cluster. 254–256 (RIR) lines the GTP pocket. [4Fe-4S] cluster is bound at residue C266.

The protein belongs to the radical SAM superfamily. MoaA family. In terms of assembly, monomer and homodimer. [4Fe-4S] cluster is required as a cofactor.

It carries out the reaction GTP + AH2 + S-adenosyl-L-methionine = (8S)-3',8-cyclo-7,8-dihydroguanosine 5'-triphosphate + 5'-deoxyadenosine + L-methionine + A + H(+). It functions in the pathway cofactor biosynthesis; molybdopterin biosynthesis. Functionally, catalyzes the cyclization of GTP to (8S)-3',8-cyclo-7,8-dihydroguanosine 5'-triphosphate. The polypeptide is GTP 3',8-cyclase (Sulfurimonas denitrificans (strain ATCC 33889 / DSM 1251) (Thiomicrospira denitrificans (strain ATCC 33889 / DSM 1251))).